Reading from the N-terminus, the 334-residue chain is Glycerol-3-phosphate dehydrogenase [NAD(P)+] (334 aa).

The NADPH site is built by Trp-14, Arg-34, and Lys-107. Positions 107 and 135 each coordinate sn-glycerol 3-phosphate. Residue Ala-139 participates in NADPH binding. Sn-glycerol 3-phosphate is bound by residues Lys-190, Asp-243, Ser-253, Arg-254, and Asn-255. Lys-190 functions as the Proton acceptor in the catalytic mechanism. Arg-254 is a binding site for NADPH. NADPH contacts are provided by Val-272 and Glu-273.

Belongs to the NAD-dependent glycerol-3-phosphate dehydrogenase family.

It localises to the cytoplasm. It catalyses the reaction sn-glycerol 3-phosphate + NAD(+) = dihydroxyacetone phosphate + NADH + H(+). It carries out the reaction sn-glycerol 3-phosphate + NADP(+) = dihydroxyacetone phosphate + NADPH + H(+). It participates in membrane lipid metabolism; glycerophospholipid metabolism. Its function is as follows. Catalyzes the reduction of the glycolytic intermediate dihydroxyacetone phosphate (DHAP) to sn-glycerol 3-phosphate (G3P), the key precursor for phospholipid synthesis. This chain is Glycerol-3-phosphate dehydrogenase [NAD(P)+], found in Neorickettsia sennetsu (strain ATCC VR-367 / Miyayama) (Ehrlichia sennetsu).